Reading from the N-terminus, the 273-residue chain is Dermonecrotic toxin LsaSicTox-alphaIB1ai (273 aa).

His-5 is a catalytic residue. Glu-25 and Asp-27 together coordinate Mg(2+). Residue His-41 is the Nucleophile of the active site. 2 disulfides stabilise this stretch: Cys-45/Cys-51 and Cys-47/Cys-190. Asp-85 contributes to the Mg(2+) binding site.

It belongs to the arthropod phospholipase D family. Class II subfamily. The cofactor is Mg(2+). Expressed by the venom gland.

The protein localises to the secreted. It catalyses the reaction an N-(acyl)-sphingosylphosphocholine = an N-(acyl)-sphingosyl-1,3-cyclic phosphate + choline. The enzyme catalyses an N-(acyl)-sphingosylphosphoethanolamine = an N-(acyl)-sphingosyl-1,3-cyclic phosphate + ethanolamine. The catalysed reaction is a 1-acyl-sn-glycero-3-phosphocholine = a 1-acyl-sn-glycero-2,3-cyclic phosphate + choline. It carries out the reaction a 1-acyl-sn-glycero-3-phosphoethanolamine = a 1-acyl-sn-glycero-2,3-cyclic phosphate + ethanolamine. Functionally, dermonecrotic toxins cleave the phosphodiester linkage between the phosphate and headgroup of certain phospholipids (sphingolipid and lysolipid substrates), forming an alcohol (often choline) and a cyclic phosphate. This toxin acts on sphingomyelin (SM). It may also act on ceramide phosphoethanolamine (CPE), lysophosphatidylcholine (LPC) and lysophosphatidylethanolamine (LPE), but not on lysophosphatidylserine (LPS), and lysophosphatidylglycerol (LPG). It acts by transphosphatidylation, releasing exclusively cyclic phosphate products as second products. Induces dermonecrosis, hemolysis, increased vascular permeability, edema, inflammatory response, and platelet aggregation. The chain is Dermonecrotic toxin LsaSicTox-alphaIB1ai from Loxosceles sabina (Tucson recluse spider).